Reading from the N-terminus, the 251-residue chain is Protein CMS1 (251 aa).

The tract at residues 1-37 (MSLDNDINTKKRKLQDDEKPRKKRKHKRPTRDDDADL) is disordered.

This sequence belongs to the CMS1 family.

It localises to the nucleus. In terms of biological role, may play a role in the regulation of DNA replication and cell cycle control. This is Protein CMS1 (CSM1) from Chaetomium thermophilum (strain DSM 1495 / CBS 144.50 / IMI 039719) (Thermochaetoides thermophila).